Reading from the N-terminus, the 184-residue chain is Large ribosomal subunit protein uL6 (184 aa).

The protein belongs to the universal ribosomal protein uL6 family. As to quaternary structure, part of the 50S ribosomal subunit.

In terms of biological role, this protein binds to the 23S rRNA, and is important in its secondary structure. It is located near the subunit interface in the base of the L7/L12 stalk, and near the tRNA binding site of the peptidyltransferase center. This Desulfurococcus amylolyticus (strain DSM 18924 / JCM 16383 / VKM B-2413 / 1221n) (Desulfurococcus kamchatkensis) protein is Large ribosomal subunit protein uL6.